The chain runs to 223 residues: Killer cell lectin-like receptor subfamily B member 1B allele A (223 aa).

At 1 to 43 (MDSTTLVYADLNLARIQEPKHDSPPSLSPDTCRCPRWHRLALK) the chain is on the cytoplasmic side. Residues 6-11 (LVYADL) carry the ITIM motif motif. An LCK-binding motif motif is present at residues 32–35 (CRCP). A helical; Signal-anchor for type II membrane protein transmembrane segment spans residues 44-63 (FGCAGLILLVLVVIGLCVLV). Topologically, residues 64–223 (LSVQKSSVQK…LNHETPSNDS (160 aa)) are extracellular. The C-type lectin domain occupies 93 to 212 (ECPQDWLSHR…STDNRWICQK (120 aa)). 2 disulfide bridges follow: Cys122–Cys210 and Cys189–Cys202.

Homodimer; disulfide-linked. Interacts with tyrosine kinase LCK. Binds PTPN6/SHP-1 in a phosphorylation-dependent manner. Expressed in NK cells and a subset of T-cells.

The protein localises to the membrane. Functionally, receptor for CLEC2D/OCIL. Ligand-binding contributes to inhibition of cytotoxic natural killer (NK) cells. May mediate MHC class I-independent 'missing-self' recognition of allografts, tumor cells and virus-infected cells. This is Killer cell lectin-like receptor subfamily B member 1B allele A (Klrb1b) from Mus musculus (Mouse).